A 123-amino-acid chain; its full sequence is UPF0102 protein CLK_1817 (123 aa).

The protein belongs to the UPF0102 family.

The chain is UPF0102 protein CLK_1817 from Clostridium botulinum (strain Loch Maree / Type A3).